A 571-amino-acid chain; its full sequence is Streptolysin O (571 aa).

A signal peptide spans 1–33 (MSNKKTFKKYSRVAGLLTAALIIGNLVTANAES). A disordered region spans residues 30–108 (NAESNKQNTA…KKSEEDHTEE (79 aa)). The segment covering 37 to 48 (NTASTETTTTNE) has biased composition (low complexity). Composition is skewed to basic and acidic residues over residues 50–68 (PKPE…KTDD) and 79–108 (APKE…HTEE). Transmembrane regions (beta stranded) follow at residues 260–273 (KSQI…NSKI), 280–289 (IDFKSISKGE), 358–367 (SNDVEAAFSA), and 375–387 (KTNG…LENS). The Conserved undecapeptide signature appears at 529 to 539 (ECTGLAWEWWR). Positions 561-562 (TL) match the Cholesterol binding motif.

This sequence belongs to the cholesterol-dependent cytolysin family. In terms of assembly, homooligomeric pore complex of 35 to 50 subunits; when inserted in the host membrane.

Its subcellular location is the secreted. The protein resides in the host cell membrane. Functionally, a cholesterol-dependent toxin that causes cytolysis by forming pores in cholesterol containing host membranes. After binding to target membranes, the protein undergoes a major conformation change, leading to its insertion in the host membrane and formation of an oligomeric pore complex. Cholesterol is required for binding to host membranes, membrane insertion and pore formation; cholesterol binding is mediated by a Thr-Leu pair in the C-terminus. Can be reversibly inactivated by oxidation. This Streptococcus pyogenes serotype M18 (strain MGAS8232) protein is Streptolysin O (slo).